The sequence spans 887 residues: Phosphatidylinositol 3-kinase catalytic subunit type 3 (887 aa).

The 150-residue stretch at 35–184 folds into the C2 PI3K-type domain; sequence YKAVLEDPML…LAKLTKAHRQ (150 aa). The interval 149 to 170 is disordered; it reads VEADGSEPTRTPGRTSSTLSED. Residues 156-170 show a composition bias toward polar residues; the sequence is PTRTPGRTSSTLSED. Phosphothreonine; by AMPK is present on Thr-163. Ser-165 is modified (phosphoserine; by AMPK). A phosphoserine mark is found at Ser-244, Ser-261, and Ser-282. The region spanning 283-520 is the PIK helical domain; that stretch reads DHDLKPNATT…PKTHEMYLNV (238 aa). Residues 416–467 form a disordered region; it reads EPTKKDSQASVSESLSSSGVSSADIDSSQIITNPLPPVASPPPASKSKEVSD. Residues 423 to 444 show a composition bias toward low complexity; it reads QASVSESLSSSGVSSADIDSSQ. Residues 449 to 459 show a composition bias toward pro residues; that stretch reads PLPPVASPPPA. Residues 605-871 enclose the PI3K/PI4K catalytic domain; sequence IPETATLFKS…LIDESVHALF (267 aa). The interval 611 to 617 is G-loop; that stretch reads LFKSALM. The interval 740 to 748 is catalytic loop; sequence GVGDRHLDN. Positions 759–780 are activation loop; sequence HIDFGYILGRDPKPLPPPMKLN.

The protein belongs to the PI3/PI4-kinase family. Component of the PI3K (PI3KC3/PI3K-III/class III phosphatidylinositol 3-kinase) complex the core of which is composed of the catalytic subunit PIK3C3, the regulatory subunit PIK3R4 and BECN1 associating with additional regulatory/auxiliary subunits to form alternative complex forms. Alternative complex forms containing a fourth regulatory subunit in a mutually exclusive manner are: the PI3K complex I (PI3KC3-C1) containing ATG14, and the PI3K complex II (PI3KC3-C2) containing UVRAG. PI3KC3-C1 displays a V-shaped architecture with PIK3R4 serving as a bridge between PIK3C3 and the ATG14:BECN1 subcomplex. Both, PI3KC3-C1 and PI3KC3-C2, can associate with further regulatory subunits such as RUBCN, SH3GLB1/Bif-1 and AMBRA1. PI3KC3-C1 probably associates with PIK3CB. Interacts with RAB7A in the presence of PIK3R4. Interacts with AMBRA1. Interacts with BECN1P1/BECN2. Interacts with SLAMF1. May interact with DYN2. May be a component of a complex composed of RAB5A (in GDP-bound form), DYN2 and PIK3C3. Interacts with NCKAP1L. Interacts with ATG14; this interaction is increased in the absence of TMEM39A. Interacts with STEEP1; the interaction is STING1-dependent and required for trafficking of STING1 from the endoplasmic reticulum. Interacts with YWHAG. Interacts with ARMC3. Mn(2+) is required as a cofactor. In terms of processing, ubiquitinated via 'Lys-29'- and 'Lys-48'-linked ubiquitination by UBE3C, promoting its degradation. Deubiquitination by ZRANB1/TRABID promotes its stabilization, leading to autophagosome maturation.

It is found in the midbody. The protein localises to the late endosome. It localises to the cytoplasmic vesicle. Its subcellular location is the autophagosome. It carries out the reaction a 1,2-diacyl-sn-glycero-3-phospho-(1D-myo-inositol) + ATP = a 1,2-diacyl-sn-glycero-3-phospho-(1D-myo-inositol-3-phosphate) + ADP + H(+). Functionally, catalytic subunit of the PI3K complex that mediates formation of phosphatidylinositol 3-phosphate; different complex forms are believed to play a role in multiple membrane trafficking pathways: PI3KC3-C1 is involved in initiation of autophagosomes and PI3KC3-C2 in maturation of autophagosomes and endocytosis. As part of PI3KC3-C1, promotes endoplasmic reticulum membrane curvature formation prior to vesicle budding. Involved in regulation of degradative endocytic trafficking and required for the abscission step in cytokinesis, probably in the context of PI3KC3-C2. Involved in the transport of lysosomal enzyme precursors to lysosomes. Required for transport from early to late endosomes. This Rattus norvegicus (Rat) protein is Phosphatidylinositol 3-kinase catalytic subunit type 3.